The following is a 1198-amino-acid chain: MALVQAHRARRLHAEAPDSGDQPPRRRVRQQPPRAAPAPARARRRRAPAPSPGGSRAPPTSGGPPASPLLDASSKDTPAAHRPPRGTVVAPRGCGLLQVIDAATNQPLEIRYHLDLARALTRLCEVNLQELPPDLSPRELQTMDSSHLRDVVIKLRPPRADIWTLGSRGVVVRSTITPLEQPDGQGQAAEVEDHQPNPPGEGLKFPLCFLVRGRQVNLVQDVQPVHRCQYCARFYKSQHECSARRRDFYFHHINSHSSNWWREIQFFPIGSHPRTERLFVTYDVETYTWMGAFGKQLVPFMLVMKFGGDEPLVTAARDLAVDLGWDRWEQDPLTFYCITPEKMAIGRQFRTFRDHLQMLMARDLWSSFVASNPHLADWALSEHGLSSPEELTYEELKKLPSIKGTPRFLELYIVGHNINGFDEIVLAAQVINNRSEVPGPFRITRNFMPRAGKILFNDVTFALPNPRSKKRTDFLLWEQGGCDDTDFKYQYLKVMVRDTFALTHTSLRKAAQAYALPVEKGCCAYQAVNQFYMLGSYRSEADGFPIQEYWKDREEFVLNRELWKKKGQDKYDIIKETLDYCALDVQVTAELVNKLRDSYASFVRDAVGLTDASFNVFQRPTISSNSHAIFRQIVFRAEQPARSNLGPDLLAPSHELYDYVRASIRGGRCYPTYLGILREPLYVYDICGMYASALTHPMPWGPPLNPYERALAARAWQQALDLQGCKIDYFDARLLPGVFTVDADPPDETQLDPLPPFCSRKGGRLCWTNERLRGEVATSVDLVTLHNRGWRVHLVPDERTTVFPEWRCVAREYVQLNIAAKERADRDKNQTLRSIAKLLSNALYGSFATKLDNKKIVFSDQMDAATLKGITAGQVNIKSSSFLETDNLSAEVMPAFEREYSPQQLALADSDAEESEDERAPTPFYSPPSGTPGHVAYTYKPITFLDAEEGDMCLHTLERVDPLVDNDRYPSHLASFVLAWTRAFVSEWSEFLYEEDRGTPLEDRPLKSVYGDTDSLFVTERGHRLMETRGKKRIKKHGGNLVFDPERPELTWLVECETVCGACGADAYSPESVFLAPKLYALKSLHCPSCGASSKGKLRAKGHAAEGLDYDTMVKCYLADAQGEDRQRFSTSRTSLKRTLASAQPGAHPFTVTQTTLTRTLRPWKDMTLARLDEHRLLPYSESRPNPRNEEICWIEMP.

Disordered stretches follow at residues 1–90, 179–198, and 906–931; these read MALV…TVVA, LEQP…QPNP, and ALAD…PSGT. Positions 30 to 40 are enriched in low complexity; that stretch reads QQPPRAAPAPA.

It belongs to the DNA polymerase type-B family. As to quaternary structure, heterodimer with the terminal protein; this heterodimer binds to bp 9 to 18 of the genome. Forms a complex with viral pTP, DBP and hosts NFIA and POU2F1/OCT1 for initiation of replication.

It localises to the host nucleus. The enzyme catalyses DNA(n) + a 2'-deoxyribonucleoside 5'-triphosphate = DNA(n+1) + diphosphate. Functionally, eukaryotic-type DNA polymerase involved in viral genomic replication. DNA synthesis is protein primed, and acts in a strand displacement replication. Assembles in complex with viral pTP, DBP, host NFIA and host POU2F1/OCT1 on viral origin of replication. The polymerase covalently transfers dCMP onto pTP, thereby initiating complementary strand synthesis. The polypeptide is DNA polymerase (Homo sapiens (Human)).